The sequence spans 742 residues: Transcription factor FFUJ_09177 (742 aa).

Positions Cys15–Cys41 form a DNA-binding region, zn(2)-C6 fungal-type. Disordered regions lie at residues Gly50 to Gln80 and His218 to Asp244. Positions His218–Ser240 are enriched in polar residues.

The protein localises to the nucleus. Its function is as follows. Transcription factor; part of the DMATS1 gene cluster that mediates the biosynthesis of a reversely N-prenylated monomeric L-tryptophan (r-N-DMAT). Seems not to regulate the expression of the DMATS1 cluster. The polypeptide is Transcription factor FFUJ_09177 (Gibberella fujikuroi (strain CBS 195.34 / IMI 58289 / NRRL A-6831) (Bakanae and foot rot disease fungus)).